The primary structure comprises 626 residues: MSKKGRSKGEKPEMETDAVQMANEELRAKLTSIQIEFQQEKSKVGKLRERLQEAKLEREQEQRRHTAYISELKAKLHEEKTKELQALREGLIRQHEQEAARTAKIKEGELQRLQATLNVLRDGAADKVKTALLTEAREEARRAFDGERLRLQQEILELKAARKQAEEALSNCMQADKTKAADLRAAYQAHQDEVHRIKRECERDIRRLMDEIKGKDRVILALEKELGVQAGQTQKLLLQKEALDEQLVQVKEAERHHSSPKRELPPGIGDMVELMGVQDQHMDERDVRRFQLKIAELNSVIRKLEDRNTLLADERNELLKRSRETEVQLKPLVEKNKRMNKKNEDLLQSIQRMEEKIKNLTRENVEMKEKLSAQASLKRHTSLNDLSLTRDEQEIEFLRLQVLEQQHVIDDLSLERERLLRSKRHRGKSLKPPKKHVVETFFGFDEESVDSETLSETSYNTDRTDRTPATPEEDLDDATAREEADLRFCQLTREYQALQRAYALLQEQVGGTLDAEREARTREQLQADLLRCQAKIEDLEKLLVEKGQDSKWVEEKQLLIRTNQDLLEKIYRLEMEENQLKNEMQDAKDQNELLEFRVLELEVRDSICCKLSNGADILFEPKLKFM.

The interval 1 to 22 (MSKKGRSKGEKPEMETDAVQMA) is disordered. Residues 1–365 (MSKKGRSKGE…KIKNLTRENV (365 aa)) are mediates association with microtubules. 2 coiled-coil regions span residues 19-255 (VQMA…EAER) and 284-413 (ERDV…DDLS). The mediates interaction with TYK2 and GABBR1 stretch occupies residues 365 to 626 (VEMKEKLSAQ…ILFEPKLKFM (262 aa)). At Ser-382 the chain carries Phosphoserine. Polar residues predominate over residues 452–461 (ETLSETSYNT). Positions 452-477 (ETLSETSYNTDRTDRTPATPEEDLDD) are disordered. Thr-470 is subject to Phosphothreonine. The stretch at 490 to 604 (QLTREYQALQ…EFRVLELEVR (115 aa)) forms a coiled coil.

The protein belongs to the JAKMIP family. Homodimer. Forms a complex with GABBR1 and KIF5B/kinesin-1. Interacts with JAK1 and TYK2. In terms of tissue distribution, predominantly expressed in neural tissues and lymphoid cells (at protein level). Isoform 2, isoform 3 and isoform 4 are specifically expressed in brain and retina. Isoform 1 and isoform 5 are also detected in liver, lung and skeletal muscle. Also detected in testis and to a lower extent spleen and intestine.

It localises to the cytoplasm. Its subcellular location is the cytoskeleton. The protein resides in the membrane. Functionally, associates with microtubules and may play a role in the microtubule-dependent transport of the GABA-B receptor. May play a role in JAK1 signaling and regulate microtubule cytoskeleton rearrangements. In Homo sapiens (Human), this protein is Janus kinase and microtubule-interacting protein 1 (JAKMIP1).